The chain runs to 241 residues: tRNA (guanine-N(7)-)-methyltransferase (241 aa).

Residues glycine 61, glutamate 84, arginine 86, asparagine 117, alanine 118, and leucine 137 each coordinate S-adenosyl-L-methionine. The active site involves aspartate 140. Positions 141-149 are alphaC helix; it reads PHFKKTKHK. S-adenosyl-L-methionine is bound by residues threonine 215 and glutamate 217. Positions 215–223 are alpha6 helix; sequence TEEGKKVQR.

This sequence belongs to the class I-like SAM-binding methyltransferase superfamily. TrmB family. Catalytic component of the METTL1-WDR4 complex, composed of mettl1 and wdr4.

It localises to the nucleus. The catalysed reaction is guanosine(46) in tRNA + S-adenosyl-L-methionine = N(7)-methylguanosine(46) in tRNA + S-adenosyl-L-homocysteine. The enzyme catalyses a guanosine in mRNA + S-adenosyl-L-methionine = an N(7)-methylguanosine in mRNA + S-adenosyl-L-homocysteine. It carries out the reaction a guanosine in miRNA + S-adenosyl-L-methionine = an N(7)-methylguanosine in miRNA + S-adenosyl-L-homocysteine. It participates in tRNA modification; N(7)-methylguanine-tRNA biosynthesis. In terms of biological role, catalytic component of METTL1-WDR4 methyltransferase complex that mediates the formation of N(7)-methylguanine in a subset of RNA species, such as tRNAs, mRNAs and microRNAs (miRNAs). Catalyzes the formation of N(7)-methylguanine at position 46 (m7G46) in a large subset of tRNAs that contain the 5'-RAGGU-3' motif within the variable loop. M7G46 interacts with C13-G22 in the D-loop to stabilize tRNA tertiary structure and protect tRNAs from decay. Also acts as a methyltransferase for a subset of internal N(7)-methylguanine in mRNAs. Internal N(7)-methylguanine methylation of mRNAs in response to stress promotes their relocalization to stress granules, thereby suppressing their translation. Also methylates a specific subset of miRNAs. The chain is tRNA (guanine-N(7)-)-methyltransferase (mettl1) from Danio rerio (Zebrafish).